Reading from the N-terminus, the 95-residue chain is Large ribosomal subunit protein uL23 (95 aa).

This sequence belongs to the universal ribosomal protein uL23 family. Part of the 50S ribosomal subunit. Contacts protein L29, and trigger factor when it is bound to the ribosome.

Its function is as follows. One of the early assembly proteins it binds 23S rRNA. One of the proteins that surrounds the polypeptide exit tunnel on the outside of the ribosome. Forms the main docking site for trigger factor binding to the ribosome. This Desulfotalea psychrophila (strain LSv54 / DSM 12343) protein is Large ribosomal subunit protein uL23.